The primary structure comprises 436 residues: Glutamate-1-semialdehyde 2,1-aminomutase (436 aa).

N6-(pyridoxal phosphate)lysine is present on K276.

It belongs to the class-III pyridoxal-phosphate-dependent aminotransferase family. HemL subfamily. As to quaternary structure, homodimer. It depends on pyridoxal 5'-phosphate as a cofactor.

It localises to the cytoplasm. It catalyses the reaction (S)-4-amino-5-oxopentanoate = 5-aminolevulinate. Its pathway is porphyrin-containing compound metabolism; protoporphyrin-IX biosynthesis; 5-aminolevulinate from L-glutamyl-tRNA(Glu): step 2/2. It participates in porphyrin-containing compound metabolism; chlorophyll biosynthesis. The chain is Glutamate-1-semialdehyde 2,1-aminomutase from Synechococcus sp. (strain JA-2-3B'a(2-13)) (Cyanobacteria bacterium Yellowstone B-Prime).